A 953-amino-acid chain; its full sequence is uncharacterized protein (953 aa).

11 helical membrane passes run 23–43, 103–123, 148–168, 392–412, 435–455, 481–501, 540–560, 575–595, 599–619, 642–662, and 666–686; these read VVTS…AFLI, YLFI…PILL, GRYF…LYII, VSAI…VGMI, LLGL…MSFL, AYFA…SAAT, ISSG…LGAF, LSSM…VITF, IISP…YIAY, LFQT…LFAV, and WGPI…HLHL. Residues 910 to 953 are disordered; that stretch reads VPPPYNDVKDEANGEANGEFDTASKENNPFADPKYKEEESRSAV. Residues 942–953 are compositionally biased toward basic and acidic residues; that stretch reads PKYKEEESRSAV. Ser-949 is modified (phosphoserine).

This sequence belongs to the CSC1 (TC 1.A.17) family.

It is found in the membrane. In terms of biological role, acts as an osmosensitive calcium-permeable cation channel. This is an uncharacterized protein from Saccharomyces cerevisiae (strain ATCC 204508 / S288c) (Baker's yeast).